Consider the following 613-residue polypeptide: Dihydroxy-acid dehydratase (613 aa).

Aspartate 81 is a binding site for Mg(2+). Residue cysteine 122 coordinates [2Fe-2S] cluster. 2 residues coordinate Mg(2+): aspartate 123 and lysine 124. The residue at position 124 (lysine 124) is an N6-carboxylysine. A [2Fe-2S] cluster-binding site is contributed by cysteine 193. A Mg(2+)-binding site is contributed by glutamate 489. Serine 515 (proton acceptor) is an active-site residue.

This sequence belongs to the IlvD/Edd family. As to quaternary structure, homodimer. [2Fe-2S] cluster is required as a cofactor. Mg(2+) serves as cofactor.

The enzyme catalyses (2R)-2,3-dihydroxy-3-methylbutanoate = 3-methyl-2-oxobutanoate + H2O. It catalyses the reaction (2R,3R)-2,3-dihydroxy-3-methylpentanoate = (S)-3-methyl-2-oxopentanoate + H2O. It functions in the pathway amino-acid biosynthesis; L-isoleucine biosynthesis; L-isoleucine from 2-oxobutanoate: step 3/4. The protein operates within amino-acid biosynthesis; L-valine biosynthesis; L-valine from pyruvate: step 3/4. Its function is as follows. Functions in the biosynthesis of branched-chain amino acids. Catalyzes the dehydration of (2R,3R)-2,3-dihydroxy-3-methylpentanoate (2,3-dihydroxy-3-methylvalerate) into 2-oxo-3-methylpentanoate (2-oxo-3-methylvalerate) and of (2R)-2,3-dihydroxy-3-methylbutanoate (2,3-dihydroxyisovalerate) into 2-oxo-3-methylbutanoate (2-oxoisovalerate), the penultimate precursor to L-isoleucine and L-valine, respectively. In Pseudomonas putida (strain ATCC 47054 / DSM 6125 / CFBP 8728 / NCIMB 11950 / KT2440), this protein is Dihydroxy-acid dehydratase.